Here is a 496-residue protein sequence, read N- to C-terminus: Pituitary adenylate cyclase-activating polypeptide type I receptor (496 aa).

A signal peptide spans 1-20 (MARTLQLSLTALLLLPMAIA). Residues 21 to 152 (MHSDCIFKKE…SGDQDYYYLS (132 aa)) lie on the Extracellular side of the membrane. Intrachain disulfides connect cysteine 34–cysteine 63, cysteine 54–cysteine 118, and cysteine 77–cysteine 134. 3 N-linked (GlcNAc...) asparagine glycosylation sites follow: asparagine 48, asparagine 60, and asparagine 117. Residues 125–139 (EPFPHYFDACGFDDY) are important for ADCYAP1/PACAP ligand binding and specificity. The interval 125–139 (EPFPHYFDACGFDDY) is important for ligand binding and specificity. The chain crosses the membrane as a helical span at residues 153-177 (VKALYTVGYSTSLVTLTTAMVILCR). The Cytoplasmic portion of the chain corresponds to 178 to 187 (FRKLHCTRNF). A helical membrane pass occupies residues 188–208 (IHMNLFVSFMLRAISVFIKDW). Over 209–223 (ILYAEQDSSHCFVST) the chain is Extracellular. Residues 224–249 (VECKAVMVFFHYCVVSNYFWLFIEGL) form a helical membrane-spanning segment. Cysteine 226 and cysteine 296 are oxidised to a cystine. The Cytoplasmic segment spans residues 250–267 (YLFTLLVETFFPERRYFY). A helical membrane pass occupies residues 268-290 (WYTIIGWGTPTVCVTVWAVLRLY). Residues 291–302 (FDDAGCWDMNDS) are Extracellular-facing. Residues 303 to 329 (TALWWVIKGPVVGSIMVNFVLFIGIII) form a helical membrane-spanning segment. Residues 330–347 (ILVQKLQSPDMGGNESSI) are Cytoplasmic-facing. A helical membrane pass occupies residues 348–402 (YFSCVQKCYCKPQRAQQHSCKMSELSTITLRLARSTLLLIPLFGIHYTVFAFSPE). The Extracellular portion of the chain corresponds to 403–407 (NVSKR). Residues 408-431 (ERLVFELGLGSFQGFVVAVLYCFL) form a helical membrane-spanning segment. Topologically, residues 432-496 (NGEVQAEIKR…SSLPADNLAT (65 aa)) are cytoplasmic. A phosphoserine mark is found at serine 462 and serine 475.

It belongs to the G-protein coupled receptor 2 family. As to quaternary structure, interacts with maxadilan, a vasodilator peptide from Lutzomyia longipalpis saliva; the interaction results in ADCYAP1R1 activation.

It localises to the cell membrane. Its function is as follows. G protein-coupled receptor activated by the neuropeptide pituitary adenylate cyclase-activating polypeptide (ADCYAP1/PACAP). Binds both PACAP27 and PACAP38 bioactive peptides. Ligand binding causes a conformation change that triggers signaling via guanine nucleotide-binding proteins (G proteins) and modulates the activity of downstream effectors. Activates cAMP-dependent pathway. May regulate the release of adrenocorticotropin, luteinizing hormone, growth hormone, prolactin, epinephrine, and catecholamine. May play a role in spermatogenesis and sperm motility. Causes smooth muscle relaxation and secretion in the gastrointestinal tract. This is Pituitary adenylate cyclase-activating polypeptide type I receptor from Mus musculus (Mouse).